A 551-amino-acid chain; its full sequence is Solute carrier family 22 member 27 (551 aa).

At 1–15 the chain is on the cytoplasmic side; the sequence is MSFQELLNQVGSLGR. A helical membrane pass occupies residues 16–36; that stretch reads FQILQIVFLLLLNAIVVPHIA. Topologically, residues 37–145 are extracellular; the sequence is MENFTAAIPN…DLVCESQALN (109 aa). Asn39, Asn56, Asn62, Asn102, and Asn107 each carry an N-linked (GlcNAc...) asparagine glycan. The helical transmembrane segment at 146-166 threads the bilayer; sequence SVTKFSFMIGLFIGGIICGHL. The Cytoplasmic segment spans residues 167 to 173; sequence SDRLGRK. A helical transmembrane segment spans residues 174–194; sequence FILTCALLQFAITETCVAFAP. Over 195–203 the chain is Extracellular; it reads SFFIYCSLR. The helical transmembrane segment at 204–224 threads the bilayer; that stretch reads FLAGLSVEPILVNSHLLMLEW. The Cytoplasmic segment spans residues 225 to 234; sequence TSPKFLTMMA. The helical transmembrane segment at 235–255 threads the bilayer; sequence ALLSCAPNIGYMISAGLAFLF. The Extracellular portion of the chain corresponds to 256 to 258; the sequence is RIW. A helical transmembrane segment spans residues 259 to 279; sequence HHLQLTMSVPIFFFLILTRWL. Topologically, residues 280-348 are cytoplasmic; the sequence is SESARWLIVT…LFHTSILRKR (69 aa). A helical transmembrane segment spans residues 349 to 369; sequence ICVLSFMRLFFTVSIFGLAVH. At 370 to 376 the chain is on the extracellular side; the sequence is LQHLSSN. The helical transmembrane segment at 377 to 397 threads the bilayer; it reads IILLQFLISALAILVSVIGPF. Residues 398-405 are Cytoplasmic-facing; it reads VLNHIGRR. A helical membrane pass occupies residues 406–426; the sequence is ITYLVLMSLRGIFILIAVFVP. Over 427-432 the chain is Extracellular; that stretch reads QEMQTL. A helical membrane pass occupies residues 433 to 453; sequence RIIMATLAEGISSLCVGVSRL. The Cytoplasmic portion of the chain corresponds to 454-467; sequence HTNELLPTTLRATA. A helical membrane pass occupies residues 468-488; the sequence is VGVIGFFGNSGSFLSPLFMLL. The Extracellular portion of the chain corresponds to 489–494; sequence ATYYAN. The chain crosses the membrane as a helical span at residues 495 to 515; the sequence is MPWIFYGGFSIFNAFTVFLLP. Residues 516–551 are Cytoplasmic-facing; sequence ETKNQPLPDSTHDVGNDWKESRKGKKEDPIIKVTRF. Positions 523–551 are disordered; sequence PDSTHDVGNDWKESRKGKKEDPIIKVTRF. Residues 525-545 are compositionally biased toward basic and acidic residues; that stretch reads STHDVGNDWKESRKGKKEDPI.

The protein belongs to the major facilitator (TC 2.A.1) superfamily. Organic cation transporter (TC 2.A.1.19) family. In terms of tissue distribution, expressed in proximal kidney tubules, and in liver hepatocytes (at protein level).

Its subcellular location is the cell membrane. Functionally, does not appear to have transporter activity. Its function is as follows. Sodium-independent organic anion transporter which exhibits high specificity for L-carnitine. Can also transport salicylic acid and the drug cimetidine. The protein is Solute carrier family 22 member 27 of Mus musculus (Mouse).